The following is a 412-amino-acid chain: Lipoyl synthase, mitochondrial (412 aa).

Cysteine 127, cysteine 132, cysteine 138, cysteine 159, cysteine 163, cysteine 166, and serine 375 together coordinate [4Fe-4S] cluster. Residues 142–364 form the Radical SAM core domain; the sequence is SDDEGTATAT…EKEAMDMGFL (223 aa).

The protein belongs to the radical SAM superfamily. Lipoyl synthase family. [4Fe-4S] cluster is required as a cofactor.

Its subcellular location is the mitochondrion. It carries out the reaction [[Fe-S] cluster scaffold protein carrying a second [4Fe-4S](2+) cluster] + N(6)-octanoyl-L-lysyl-[protein] + 2 oxidized [2Fe-2S]-[ferredoxin] + 2 S-adenosyl-L-methionine + 4 H(+) = [[Fe-S] cluster scaffold protein] + N(6)-[(R)-dihydrolipoyl]-L-lysyl-[protein] + 4 Fe(3+) + 2 hydrogen sulfide + 2 5'-deoxyadenosine + 2 L-methionine + 2 reduced [2Fe-2S]-[ferredoxin]. It participates in protein modification; protein lipoylation via endogenous pathway; protein N(6)-(lipoyl)lysine from octanoyl-[acyl-carrier-protein]: step 2/2. Its function is as follows. Catalyzes the radical-mediated insertion of two sulfur atoms into the C-6 and C-8 positions of the octanoyl moiety bound to the lipoyl domains of lipoate-dependent enzymes, thereby converting the octanoylated domains into lipoylated derivatives. The chain is Lipoyl synthase, mitochondrial from Leishmania infantum.